Consider the following 424-residue polypeptide: CinA-like protein (424 aa).

The protein belongs to the CinA family.

This chain is CinA-like protein, found in Shewanella loihica (strain ATCC BAA-1088 / PV-4).